We begin with the raw amino-acid sequence, 883 residues long: Bifunctional heparan sulfate N-deacetylase/N-sulfotransferase 2 (883 aa).

Topologically, residues 1–18 are cytoplasmic; that stretch reads MLQLWKVVRPARQLELHR. The helical; Signal-anchor for type II membrane protein transmembrane segment at 19–39 threads the bilayer; that stretch reads LILLLIGFSLVSMGFLAYYVS. Residues 40 to 883 lie on the Lumenal side of the membrane; the sequence is TSPKAKEPLP…REELQHSSVG (844 aa). Positions 41 to 597 are heparan sulfate N-deacetylase 2; it reads SPKAKEPLPL…KRHKDIWSKE (557 aa). The segment at 49–82 is disordered; it reads PLPLGDCSSSGAAGPGPARPPVPPRPQRPPETTR. Positions 65–77 are enriched in pro residues; that stretch reads PARPPVPPRPQRP. Residues asparagine 233, asparagine 350, and asparagine 400 are each glycosylated (N-linked (GlcNAc...) asparagine). A heparan sulfate N-sulfotransferase 2 region spans residues 598-883; that stretch reads KTCDRLPKFL…REELQHSSVG (286 aa). The active-site For sulfotransferase activity is lysine 613. 613–617 provides a ligand contact to 3'-phosphoadenylyl sulfate; the sequence is KTGTT. Asparagine 666 carries N-linked (GlcNAc...) asparagine glycosylation. 3'-phosphoadenylyl sulfate is bound at residue serine 711. N-linked (GlcNAc...) asparagine glycans are attached at residues asparagine 726 and asparagine 802. A disulfide bridge links cysteine 817 with cysteine 827. 3'-phosphoadenylyl sulfate is bound at residue 832–836; sequence KGRRY.

The protein belongs to the sulfotransferase 1 family. NDST subfamily. As to quaternary structure, monomer. In terms of tissue distribution, widely expressed in adult and throughout development.

The protein localises to the golgi apparatus membrane. It carries out the reaction alpha-D-glucosaminyl-[heparan sulfate](n) + 3'-phosphoadenylyl sulfate = N-sulfo-alpha-D-glucosaminyl-[heparan sulfate](n) + adenosine 3',5'-bisphosphate + 2 H(+). The protein operates within glycan metabolism; heparan sulfate biosynthesis. It participates in glycan metabolism; heparin biosynthesis. Functionally, essential bifunctional enzyme that catalyzes both the N-deacetylation and the N-sulfation of glucosamine (GlcNAc) of the glycosaminoglycan in heparan sulfate. Modifies the GlcNAc-GlcA disaccharide repeating sugar backbone to make N-sulfated heparosan, a prerequisite substrate for later modifications in heparin biosynthesis. Plays a role in determining the extent and pattern of sulfation of heparan sulfate. Required for the exosomal release of SDCBP, CD63 and syndecan. The protein is Bifunctional heparan sulfate N-deacetylase/N-sulfotransferase 2 (Ndst2) of Mus musculus (Mouse).